Here is a 288-residue protein sequence, read N- to C-terminus: Signal recognition particle receptor FtsY (288 aa).

GTP is bound by residues 93 to 100 (GINGTGKT), 175 to 179 (DTAGR), and 233 to 236 (TKLD).

This sequence belongs to the GTP-binding SRP family. FtsY subfamily. In terms of assembly, part of the signal recognition particle protein translocation system, which is composed of SRP and FtsY.

It localises to the cell membrane. The protein localises to the cytoplasm. It catalyses the reaction GTP + H2O = GDP + phosphate + H(+). Involved in targeting and insertion of nascent membrane proteins into the cytoplasmic membrane. Acts as a receptor for the complex formed by the signal recognition particle (SRP) and the ribosome-nascent chain (RNC). The protein is Signal recognition particle receptor FtsY of Thermoplasma acidophilum (strain ATCC 25905 / DSM 1728 / JCM 9062 / NBRC 15155 / AMRC-C165).